The chain runs to 266 residues: Shikimate dehydrogenase (NADP(+)) (266 aa).

Shikimate is bound by residues 14-16 (SLS) and Thr-61. Lys-65 serves as the catalytic Proton acceptor. Shikimate contacts are provided by Asn-85 and Asp-100. NADP(+) is bound by residues 124 to 128 (GAGGA) and Ala-210. Residue Tyr-212 participates in shikimate binding. An NADP(+)-binding site is contributed by Gly-233.

This sequence belongs to the shikimate dehydrogenase family. As to quaternary structure, homodimer.

It catalyses the reaction shikimate + NADP(+) = 3-dehydroshikimate + NADPH + H(+). It functions in the pathway metabolic intermediate biosynthesis; chorismate biosynthesis; chorismate from D-erythrose 4-phosphate and phosphoenolpyruvate: step 4/7. Involved in the biosynthesis of the chorismate, which leads to the biosynthesis of aromatic amino acids. Catalyzes the reversible NADPH linked reduction of 3-dehydroshikimate (DHSA) to yield shikimate (SA). This chain is Shikimate dehydrogenase (NADP(+)), found in Halobacterium salinarum (strain ATCC 29341 / DSM 671 / R1).